The chain runs to 635 residues: Threonine--tRNA ligase (635 aa).

Residues 1–61 form the TGS domain; it reads MINISFPDGS…DNDCKLRILT (61 aa). Residues 242–533 form a catalytic region; that stretch reads DHRKLGRELD…LIEEYAGRFP (292 aa). Positions 333, 384, and 510 each coordinate Zn(2+).

This sequence belongs to the class-II aminoacyl-tRNA synthetase family. As to quaternary structure, homodimer. Requires Zn(2+) as cofactor.

The protein localises to the cytoplasm. It catalyses the reaction tRNA(Thr) + L-threonine + ATP = L-threonyl-tRNA(Thr) + AMP + diphosphate + H(+). Its function is as follows. Catalyzes the attachment of threonine to tRNA(Thr) in a two-step reaction: L-threonine is first activated by ATP to form Thr-AMP and then transferred to the acceptor end of tRNA(Thr). Also edits incorrectly charged L-seryl-tRNA(Thr). The polypeptide is Threonine--tRNA ligase (Rickettsia conorii (strain ATCC VR-613 / Malish 7)).